Consider the following 108-residue polypeptide: UPF0060 membrane protein amb3269 (108 aa).

The next 4 helical transmembrane spans lie at 4–24 (IPTY…FWAW), 31–51 (PLWL…LTRI), 59–79 (AYAA…WAVE), and 85–105 (RWDT…IFGP).

It belongs to the UPF0060 family.

The protein localises to the cell inner membrane. This chain is UPF0060 membrane protein amb3269, found in Paramagnetospirillum magneticum (strain ATCC 700264 / AMB-1) (Magnetospirillum magneticum).